Reading from the N-terminus, the 380-residue chain is Cystathionine gamma-synthase (380 aa).

The residue at position 195 (Lys-195) is an N6-(pyridoxal phosphate)lysine.

Belongs to the trans-sulfuration enzymes family. As to quaternary structure, homotetramer. Pyridoxal 5'-phosphate serves as cofactor.

It localises to the cytoplasm. The enzyme catalyses O-succinyl-L-homoserine + L-cysteine = L,L-cystathionine + succinate + H(+). In terms of biological role, catalyzes the formation of L-cystathionine from O-succinyl-L-homoserine (OSHS) and L-cysteine, via a gamma-replacement reaction. In the absence of thiol, catalyzes gamma-elimination to form 2-oxobutanoate, succinate and ammonia. This is Cystathionine gamma-synthase (metB) from Helicobacter pylori (strain J99 / ATCC 700824) (Campylobacter pylori J99).